We begin with the raw amino-acid sequence, 286 residues long: Energy-coupling factor transporter ATP-binding protein EcfA2 (286 aa).

The ABC transporter domain occupies 3–246; that stretch reads IRFDNVSYTY…KEKLADWHIG (244 aa). Position 40-47 (40-47) interacts with ATP; it reads GQTGSGKS.

Belongs to the ABC transporter superfamily. Energy-coupling factor EcfA family. As to quaternary structure, forms a stable energy-coupling factor (ECF) transporter complex composed of 2 membrane-embedded substrate-binding proteins (S component), 2 ATP-binding proteins (A component) and 2 transmembrane proteins (T component).

The protein resides in the cell membrane. Functionally, ATP-binding (A) component of a common energy-coupling factor (ECF) ABC-transporter complex. Unlike classic ABC transporters this ECF transporter provides the energy necessary to transport a number of different substrates. The protein is Energy-coupling factor transporter ATP-binding protein EcfA2 of Staphylococcus aureus (strain MRSA252).